A 630-amino-acid polypeptide reads, in one-letter code: Protein mono-ADP-ribosyltransferase PARP6 (630 aa).

Cys-237 is modified (ADP-ribosylcysteine). One can recognise a PARP catalytic domain in the interval 394–620 (EMTQGSYLEI…QDPKIQKEIM (227 aa)). At Asp-600 the chain carries ADP-ribosyl aspartic acid.

It belongs to the ARTD/PARP family. In terms of processing, auto-mono-ADP-ribosylated.

It catalyses the reaction L-aspartyl-[protein] + NAD(+) = 4-O-(ADP-D-ribosyl)-L-aspartyl-[protein] + nicotinamide. It carries out the reaction L-cysteinyl-[protein] + NAD(+) = S-(ADP-D-ribosyl)-L-cysteinyl-[protein] + nicotinamide + H(+). Mono-ADP-ribosyltransferase that mediates mono-ADP-ribosylation of target proteins. The sequence is that of Protein mono-ADP-ribosyltransferase PARP6 from Mus musculus (Mouse).